An 80-amino-acid chain; its full sequence is Adipogenin (80 aa).

A helical membrane pass occupies residues 14-34 (FSFLVFWFCLPVGLLLLLIIW).

This sequence belongs to the adipogenin family.

The protein localises to the membrane. The protein resides in the nucleus. Functionally, plays a role in stimulating adipocyte differentiation and development. The protein is Adipogenin of Homo sapiens (Human).